The chain runs to 774 residues: Multiple C2 domain and transmembrane region protein 11 (774 aa).

Positions 1–12 (MAVNGTGNGTGD) are enriched in gly residues. The disordered stretch occupies residues 1–30 (MAVNGTGNGTGDGDFSLKETSPNIGNGGVN). 3 consecutive C2 domains span residues 9-145 (GTGD…PQWY), 184-307 (VTGE…SLWY), and 338-471 (LDES…THSY). 4 residues coordinate Ca(2+): aspartate 62, asparagine 110, aspartate 112, and aspartate 118. The next 2 membrane-spanning stretches (helical) occupy residues 608-628 (LFVVFLPKYCVFSMLLYCFVF) and 722-742 (FVSCGVICFVSMKLLLTFLAF).

This sequence belongs to the MCTP family. It depends on Ca(2+) as a cofactor. Observed in flowers.

The protein localises to the endoplasmic reticulum membrane. Functionally, may function as a signaling molecule by regulating the trafficking of other regulators. In Arabidopsis thaliana (Mouse-ear cress), this protein is Multiple C2 domain and transmembrane region protein 11.